Reading from the N-terminus, the 109-residue chain is Cell division protein ZapA (109 aa).

Residues 21-99 adopt a coiled-coil conformation; it reads PEQQDALNQA…IEQALLEQGR (79 aa).

The protein belongs to the ZapA family. Type 1 subfamily. As to quaternary structure, homodimer. Interacts with FtsZ.

It localises to the cytoplasm. Activator of cell division through the inhibition of FtsZ GTPase activity, therefore promoting FtsZ assembly into bundles of protofilaments necessary for the formation of the division Z ring. It is recruited early at mid-cell but it is not essential for cell division. This is Cell division protein ZapA from Pectobacterium carotovorum subsp. carotovorum (strain PC1).